A 526-amino-acid polypeptide reads, in one-letter code: Tyrosine-protein kinase transforming protein Src (526 aa).

Residues 1–57 (MGSSKSKPKDPSQRRCSLEPPDSTHHGGFPASQTPNKTAAPDTHRTPSRSFGTVATE) are disordered. Glycine 2 carries N-myristoyl glycine; by host lipidation. Over residues 7–25 (KPKDPSQRRCSLEPPDSTH) the composition is skewed to basic and acidic residues. The SH3 domain occupies 81–142 (GGVTTFVALY…PSNYVAPSDS (62 aa)). The SH2 domain occupies 148–245 (WYFGKITRRE…GLCHRLTNVC (98 aa)). One can recognise a Protein kinase domain in the interval 267-517 (LRLEVKLGQG…TFEYLQAQLL (251 aa)). ATP is bound by residues 273-281 (LGQGCFGEV) and lysine 295. Aspartate 386 serves as the catalytic Proton acceptor. The residue at position 416 (tyrosine 416) is a Phosphotyrosine; by autocatalysis.

This sequence belongs to the protein kinase superfamily. Tyr protein kinase family. SRC subfamily. In terms of processing, the phosphorylated form is termed pp60v-src.

The catalysed reaction is L-tyrosyl-[protein] + ATP = O-phospho-L-tyrosyl-[protein] + ADP + H(+). In terms of biological role, this phosphoprotein, required for both the initiation and the maintenance of neoplastic transformation, is a protein kinase that catalyzes the phosphorylation of tyrosine residues in vitro. The chain is Tyrosine-protein kinase transforming protein Src (V-SRC) from Galliformes.